A 186-amino-acid polypeptide reads, in one-letter code: Peptide deformylase (186 aa).

Fe cation contacts are provided by Cys99 and His141. Residue Glu142 is part of the active site. Residue His145 coordinates Fe cation.

The protein belongs to the polypeptide deformylase family. Fe(2+) serves as cofactor.

It catalyses the reaction N-terminal N-formyl-L-methionyl-[peptide] + H2O = N-terminal L-methionyl-[peptide] + formate. Functionally, removes the formyl group from the N-terminal Met of newly synthesized proteins. Requires at least a dipeptide for an efficient rate of reaction. N-terminal L-methionine is a prerequisite for activity but the enzyme has broad specificity at other positions. This Chlamydia caviae (strain ATCC VR-813 / DSM 19441 / 03DC25 / GPIC) (Chlamydophila caviae) protein is Peptide deformylase.